A 417-amino-acid polypeptide reads, in one-letter code: UDP-N-acetylglucosamine 1-carboxyvinyltransferase (417 aa).

Residue Lys22–Asn23 participates in phosphoenolpyruvate binding. Arg94 is a UDP-N-acetyl-alpha-D-glucosamine binding site. Cys118 functions as the Proton donor in the catalytic mechanism. Cys118 is modified (2-(S-cysteinyl)pyruvic acid O-phosphothioketal). Residues Arg123–Gln127, Asp306, and Ile328 each bind UDP-N-acetyl-alpha-D-glucosamine.

The protein belongs to the EPSP synthase family. MurA subfamily.

It is found in the cytoplasm. The enzyme catalyses phosphoenolpyruvate + UDP-N-acetyl-alpha-D-glucosamine = UDP-N-acetyl-3-O-(1-carboxyvinyl)-alpha-D-glucosamine + phosphate. It participates in cell wall biogenesis; peptidoglycan biosynthesis. In terms of biological role, cell wall formation. Adds enolpyruvyl to UDP-N-acetylglucosamine. The protein is UDP-N-acetylglucosamine 1-carboxyvinyltransferase of Clostridium botulinum (strain ATCC 19397 / Type A).